We begin with the raw amino-acid sequence, 374 residues long: UPF0674 endoplasmic reticulum membrane protein C2G5.01 (374 aa).

A helical transmembrane segment spans residues 49–68; it reads FRLEFVILACFFLYVFSFIT. N-linked (GlcNAc...) asparagine glycosylation is present at asparagine 287. The interval 335–374 is disordered; the sequence is KAAKKKVKSSGDISKLSESDQKKRMERERQRKMRRRAKKM. Residues 349-363 are compositionally biased toward basic and acidic residues; that stretch reads KLSESDQKKRMERER. The segment covering 364 to 374 has biased composition (basic residues); the sequence is QRKMRRRAKKM.

This sequence belongs to the UPF0674 family.

The protein localises to the endoplasmic reticulum membrane. The polypeptide is UPF0674 endoplasmic reticulum membrane protein C2G5.01 (Schizosaccharomyces pombe (strain 972 / ATCC 24843) (Fission yeast)).